The chain runs to 674 residues: tRNA 5-methylaminomethyl-2-thiouridine biosynthesis bifunctional protein MnmC (674 aa).

The interval 1–237 (MLTSYQLESP…KREMTVGELN (237 aa)) is tRNA (mnm(5)s(2)U34)-methyltransferase. The tract at residues 270-674 (VGAGLAGANT…IRDLKRSQIL (405 aa)) is FAD-dependent cmnm(5)s(2)U34 oxidoreductase.

This sequence in the N-terminal section; belongs to the methyltransferase superfamily. tRNA (mnm(5)s(2)U34)-methyltransferase family. It in the C-terminal section; belongs to the DAO family. It depends on FAD as a cofactor.

It is found in the cytoplasm. The enzyme catalyses 5-aminomethyl-2-thiouridine(34) in tRNA + S-adenosyl-L-methionine = 5-methylaminomethyl-2-thiouridine(34) in tRNA + S-adenosyl-L-homocysteine + H(+). In terms of biological role, catalyzes the last two steps in the biosynthesis of 5-methylaminomethyl-2-thiouridine (mnm(5)s(2)U) at the wobble position (U34) in tRNA. Catalyzes the FAD-dependent demodification of cmnm(5)s(2)U34 to nm(5)s(2)U34, followed by the transfer of a methyl group from S-adenosyl-L-methionine to nm(5)s(2)U34, to form mnm(5)s(2)U34. This chain is tRNA 5-methylaminomethyl-2-thiouridine biosynthesis bifunctional protein MnmC, found in Marinomonas sp. (strain MWYL1).